The sequence spans 130 residues: Protein CPn_0713/CP_0033/CPj0713/CpB0740 (130 aa).

The protein belongs to the chlamydial CPn_0713/CT_663/TC_0034 family.

This Chlamydia pneumoniae (Chlamydophila pneumoniae) protein is Protein CPn_0713/CP_0033/CPj0713/CpB0740.